Consider the following 747-residue polypeptide: Histone-lysine N-methyltransferase EZH1 (747 aa).

Residues 188 to 231 (DEEEEGHNDTSDGKQDDSKEDLPVTRKRKRHAIEGNKKSSKKQF) are disordered. Positions 194–211 (HNDTSDGKQDDSKEDLPV) are enriched in basic and acidic residues. Residue Lys-327 forms a Glycyl lysine isopeptide (Lys-Gly) (interchain with G-Cter in SUMO2) linkage. The interval 378-421 (SAVAETKEGDSDRDTGNDWASSSSEANSRCQTPTKQKASPAPPQ) is disordered. Over residues 382–393 (ETKEGDSDRDTG) the composition is skewed to basic and acidic residues. Residues 395–414 (DWASSSSEANSRCQTPTKQK) are compositionally biased toward polar residues. The Nuclear localization signal motif lies at 491–496 (QKKKRK). Residues 504-606 (CRKIQLKKDN…CKVVSCKNCS (103 aa)) form the CXC domain. In terms of domain architecture, SET spans 613–728 (KHLLLAPSDV…AGEELFLDYR (116 aa)).

This sequence belongs to the class V-like SAM-binding methyltransferase superfamily. Histone-lysine methyltransferase family. EZ subfamily. Component of the PRC2/EED-EZH1 complex, which includes EED, EZH1, SUZ12, RBBP4 and AEBP2. The PRC2/EED-EZH1 is less abundant than the PRC2/EED-EZH2 complex, has weak methyltransferase activity and compacts chromatin in the absence of the methyltransferase cofactor S-adenosyl-L-methionine (SAM). Interacts with EZHIP; the interaction blocks EZH1 methyltransferase activity.

It is found in the nucleus. It catalyses the reaction L-lysyl(27)-[histone H3] + 3 S-adenosyl-L-methionine = N(6),N(6),N(6)-trimethyl-L-lysyl(27)-[histone H3] + 3 S-adenosyl-L-homocysteine + 3 H(+). Polycomb group (PcG) protein. Catalytic subunit of the PRC2/EED-EZH1 complex, which methylates 'Lys-27' of histone H3, leading to transcriptional repression of the affected target gene. Able to mono-, di- and trimethylate 'Lys-27' of histone H3 to form H3K27me1, H3K27me2 and H3K27me3, respectively. Required for embryonic stem cell derivation and self-renewal, suggesting that it is involved in safeguarding embryonic stem cell identity. Compared to EZH2-containing complexes, it is less abundant in embryonic stem cells, has weak methyltransferase activity and plays a less critical role in forming H3K27me3, which is required for embryonic stem cell identity and proper differentiation. The protein is Histone-lysine N-methyltransferase EZH1 (EZH1) of Pongo abelii (Sumatran orangutan).